A 488-amino-acid chain; its full sequence is RNA binding exosome specificity factor Mmi1 (488 aa).

3 stretches are compositionally biased toward polar residues: residues 1–14 (MSNT…SSKS), 33–47 (LNES…TTHT), and 54–66 (SVLS…NFSS). Disordered stretches follow at residues 1–20 (MSNT…ELPN) and 25–80 (RSLW…DAPI). Residues 71 to 80 (PAPESHDAPI) are compositionally biased toward basic and acidic residues. An interaction with erh1 region spans residues 95–122 (GKYDFSRHCTDYGHSYEWPYFRSLRRES). Disordered stretches follow at residues 163–185 (SRLH…RRLA) and 225–261 (SYPV…TRAS). Threonine 176 is subject to Phosphothreonine. 6 positions are modified to phosphoserine: serine 178, serine 230, serine 231, serine 261, serine 263, and serine 265. Positions 289 to 299 (SYLLSNSSNDS) are enriched in low complexity. The interval 289 to 328 (SYLLSNSSNDSASRKEKPKARASTPPPLNFSRASEHRNEK) is disordered. Position 311 is a phosphoserine (serine 311). Threonine 312 carries the post-translational modification Phosphothreonine. The region spanning 350–476 (SRYFIMLCDN…DEGSRLCTLI (127 aa)) is the YTH domain.

As to quaternary structure, component of the erh1-mmi1 complex composed of mmi1 and erh1. Interacts (via N-terminus) with erh1 in a 2:2 stoichiometry. Interacts with rrp6.

The protein localises to the nucleus. Its function is as follows. RNA-binding protein that recognizes and binds N6-methyladenosine (m6A)-containing RNAs, a modification present at internal sites of mRNAs and some non-coding RNAs. Functions alone and as part of the erh1-mmi1 complex, to recruit the CCR4-NOT complex and the NURS complex to target RNAs. Suppresses the meiotic program during vegetative growth and promotes the meiotic program during mating. Binds to DSR (determinant of selective removal) regions in meiotic mRNA, and recruits the NURS complex to targets. Recruitment of NURS complex to target mRNAs promotes mRNA decay by engagement of the nuclear exosome, and formation of heterochromatin islands at meiotic genes silenced by the exosome. Recruitment of the CCR4-NOT complex to target RNAs promotes heterochromatin formation at RNAi-dependent heterochromatin domains (HOODs), including a subset of meiotic genes, lncRNAs and retrotransposons. Recruitment of the CCR4-NOT complex to rDNA promotes rDNA heterochromatin assembly. Promotes non-canonical transcription termination at meiotic genes and prevents lncRNA transcription from invading and repressing adjacent genes. This is RNA binding exosome specificity factor Mmi1 (mmi1) from Schizosaccharomyces pombe (strain 972 / ATCC 24843) (Fission yeast).